The primary structure comprises 311 residues: Ribonuclease HIII (311 aa).

An RNase H type-2 domain is found at 95–311 (MSIVGSDEVG…NTEKAFRLLK (217 aa)). 3 residues coordinate a divalent metal cation: Asp-101, Glu-102, and Asp-206.

The protein belongs to the RNase HII family. RnhC subfamily. The cofactor is Mn(2+). It depends on Mg(2+) as a cofactor.

The protein resides in the cytoplasm. The catalysed reaction is Endonucleolytic cleavage to 5'-phosphomonoester.. In terms of biological role, endonuclease that specifically degrades the RNA of RNA-DNA hybrids. The polypeptide is Ribonuclease HIII (Bacillus anthracis (strain A0248)).